The primary structure comprises 567 residues: Potassium-transporting ATPase potassium-binding subunit (567 aa).

Transmembrane regions (helical) follow at residues 3-23 (MIGW…TKPL), 64-84 (LTYT…IYGV), 136-156 (GLTH…MALI), 179-199 (LYVL…QGIP), 220-240 (VGPV…GGFF), 254-274 (LSNF…TNVF), 285-305 (WAIL…TYWA), 330-350 (FGLV…CGAV), 374-394 (IIVG…VLAI), 420-440 (AMLA…VGVV), 488-508 (LASA…AIAG), and 527-547 (GGLF…LTFF).

Belongs to the KdpA family. As to quaternary structure, the system is composed of three essential subunits: KdpA, KdpB and KdpC.

The protein resides in the cell inner membrane. In terms of biological role, part of the high-affinity ATP-driven potassium transport (or Kdp) system, which catalyzes the hydrolysis of ATP coupled with the electrogenic transport of potassium into the cytoplasm. This subunit binds the periplasmic potassium ions and delivers the ions to the membrane domain of KdpB through an intramembrane tunnel. The protein is Potassium-transporting ATPase potassium-binding subunit of Bradyrhizobium diazoefficiens (strain JCM 10833 / BCRC 13528 / IAM 13628 / NBRC 14792 / USDA 110).